The primary structure comprises 464 residues: Soluble pyridine nucleotide transhydrogenase (464 aa).

35-44 (DSRRQVGGNC) serves as a coordination point for FAD.

This sequence belongs to the class-I pyridine nucleotide-disulfide oxidoreductase family. The cofactor is FAD.

It is found in the cytoplasm. It catalyses the reaction NAD(+) + NADPH = NADH + NADP(+). In terms of biological role, conversion of NADPH, generated by peripheral catabolic pathways, to NADH, which can enter the respiratory chain for energy generation. This is Soluble pyridine nucleotide transhydrogenase from Pseudomonas fluorescens (strain Pf0-1).